The chain runs to 855 residues: Spindle and centriole-associated protein 1 (855 aa).

Residues 164 to 200 (QALNDVDGEEEGTVTSQSGESENENELDNSLNSQSNT) are disordered. Residue threonine 235 is modified to Phosphothreonine. The segment covering 300–311 (KPNLHALSKPKK) has biased composition (basic residues). Residues 300 to 328 (KPNLHALSKPKKNMLSGSTTSADLPNRTN) are disordered. Over residues 314-328 (LSGSTTSADLPNRTN) the composition is skewed to polar residues. Residues 325–437 (NRTNSNLDVL…TQARLRQYMV (113 aa)) adopt a coiled-coil conformation. A phosphoserine mark is found at serine 640 and serine 644. Residues 725–751 (GSMEERIAELNRQSMEARGKLLQLIEQ) are a coiled coil. Residues serine 760, serine 764, and serine 819 each carry the phosphoserine modification. Positions 789-834 (EAPESSKCSTVSPVSEINTRRSSGATSNSCSPLNATSGSGRFTPLN) are disordered. A compositionally biased stretch (polar residues) spans 794–828 (SKCSTVSPVSEINTRRSSGATSNSCSPLNATSGSG).

As to quaternary structure, interacts with CEP120.

It localises to the cytoplasm. It is found in the cytoskeleton. The protein resides in the microtubule organizing center. The protein localises to the centrosome. Its subcellular location is the centriole. It localises to the spindle. In terms of biological role, regulator required for centriole duplication, for proper bipolar spindle formation and chromosome congression in mitosis. The protein is Spindle and centriole-associated protein 1 (SPICE1) of Pongo abelii (Sumatran orangutan).